A 172-amino-acid chain; its full sequence is Scytalone dehydratase-like protein Arp1 (172 aa).

Tyr49 lines the substrate pocket. Active-site residues include His84 and His109. Residue Asn130 coordinates substrate.

This sequence belongs to the scytalone dehydratase family. As to quaternary structure, homotrimer. Each subunit contains an active site, located in the central part of the hydrophobic core of the monomer, which functions independently.

Functionally, scytalone dehydratase-like protein; part of the Pks2 gene cluster that mediates the formation of infectious structures (appressoria), enabling these fungi to kill insects faster. The product of the Pks2 gene cluster is different from the one of Pks1 and has still not been identified. This chain is Scytalone dehydratase-like protein Arp1, found in Metarhizium robertsii (strain ARSEF 23 / ATCC MYA-3075) (Metarhizium anisopliae (strain ARSEF 23)).